The primary structure comprises 425 residues: Kynureninase (425 aa).

Pyridoxal 5'-phosphate-binding positions include L105, T106, 133-136, D218, H221, and Y243; that span reads FPSD. K244 carries the post-translational modification N6-(pyridoxal phosphate)lysine. 2 residues coordinate pyridoxal 5'-phosphate: W274 and N302.

It belongs to the kynureninase family. As to quaternary structure, homodimer. Requires pyridoxal 5'-phosphate as cofactor.

It carries out the reaction L-kynurenine + H2O = anthranilate + L-alanine + H(+). The catalysed reaction is 3-hydroxy-L-kynurenine + H2O = 3-hydroxyanthranilate + L-alanine + H(+). Its pathway is amino-acid degradation; L-kynurenine degradation; L-alanine and anthranilate from L-kynurenine: step 1/1. It participates in cofactor biosynthesis; NAD(+) biosynthesis; quinolinate from L-kynurenine: step 2/3. Its function is as follows. Catalyzes the cleavage of L-kynurenine (L-Kyn) and L-3-hydroxykynurenine (L-3OHKyn) into anthranilic acid (AA) and 3-hydroxyanthranilic acid (3-OHAA), respectively. This is Kynureninase from Flavobacterium johnsoniae (strain ATCC 17061 / DSM 2064 / JCM 8514 / BCRC 14874 / CCUG 350202 / NBRC 14942 / NCIMB 11054 / UW101) (Cytophaga johnsonae).